A 65-amino-acid polypeptide reads, in one-letter code: Large ribosomal subunit protein bL32 (65 aa).

Residues 1–19 (MAVQKSRKTPSKRGMRRSH) are compositionally biased toward basic residues. The segment at 1-32 (MAVQKSRKTPSKRGMRRSHNALVKSTLSEDQE) is disordered.

This sequence belongs to the bacterial ribosomal protein bL32 family.

This chain is Large ribosomal subunit protein bL32, found in Vesicomyosocius okutanii subsp. Calyptogena okutanii (strain HA).